Here is a 101-residue protein sequence, read N- to C-terminus: Urease subunit gamma (101 aa).

This sequence belongs to the urease gamma subunit family. Heterotrimer of UreA (gamma), UreB (beta) and UreC (alpha) subunits. Three heterotrimers associate to form the active enzyme.

It is found in the cytoplasm. The enzyme catalyses urea + 2 H2O + H(+) = hydrogencarbonate + 2 NH4(+). The protein operates within nitrogen metabolism; urea degradation; CO(2) and NH(3) from urea (urease route): step 1/1. This chain is Urease subunit gamma, found in Corynebacterium kroppenstedtii (strain DSM 44385 / JCM 11950 / CIP 105744 / CCUG 35717).